We begin with the raw amino-acid sequence, 402 residues long: Argininosuccinate synthase (402 aa).

9-17 (AYSGGLDTS) lines the ATP pocket. Y87 provides a ligand contact to L-citrulline. G117 contributes to the ATP binding site. 3 residues coordinate L-aspartate: T119, N123, and D124. N123 is an L-citrulline binding site. Residues R127, S176, S185, E261, and Y273 each contribute to the L-citrulline site.

This sequence belongs to the argininosuccinate synthase family. Type 1 subfamily. Homotetramer.

It is found in the cytoplasm. It carries out the reaction L-citrulline + L-aspartate + ATP = 2-(N(omega)-L-arginino)succinate + AMP + diphosphate + H(+). It participates in amino-acid biosynthesis; L-arginine biosynthesis; L-arginine from L-ornithine and carbamoyl phosphate: step 2/3. The sequence is that of Argininosuccinate synthase from Chlorobium phaeobacteroides (strain BS1).